We begin with the raw amino-acid sequence, 70 residues long: uncharacterized protein (70 aa).

Positions 40–70 (LHQQRTAHKVTSPPSQRPQNSETKSDSQNRS) are disordered. Polar residues predominate over residues 51–61 (SPPSQRPQNSE).

This is an uncharacterized protein from Bdellovibrio phage phiMH2K (Bacteriophage phiMH2K).